The primary structure comprises 61 residues: MFTLKKSLLLLFFLGTINLSLCEEERNAEEERRDEPDERDVQVEKRLLPIVGNLLKSLLGK.

The first 22 residues, 1-22 (MFTLKKSLLLLFFLGTINLSLC), serve as a signal peptide directing secretion. The propeptide occupies 23-44 (EEERNAEEERRDEPDERDVQVE). Leucine amide is present on Leu-59.

It belongs to the frog skin active peptide (FSAP) family. Temporin subfamily. Homo-oligomerizes in membranes as homodimers, homotrimers, or even homotetramers. Oligomerizes in presence of LPS. In Gram-positive bacterial mimetic membranes, the aggregation is weakly pronounced, and penetration proceeds more rapidly and is deeper than in Gram-negative bacterial mimetic membranes where aggregation is high. Homo-oligomerization is prevented by temporin-L. As to expression, expressed by the skin glands.

The protein localises to the secreted. The protein resides in the target cell membrane. Its subcellular location is the target cell. It is found in the target cell cytoplasm. Functionally, amphipathic alpha-helical antimicrobial peptide with potent activity against Gram-positive bacteria, weak activity against Gram-negative bacteria, and moderate activity against fungi. Mainly acts by causing membrane permeabilization, but is unable to forme pore-like openings. Is also able to penetrate eukaryotic cells (keratinocytes), and kill intracellular S.aureus (both wild-type and MRSA) without injuring host cells. Shows inhibitory effect on biofilm formation of Gram-positive bacteria, but not of Gram-negative bacteria. Shows antiviral activity against herpes simplex virus 1 (HSV-1) by disrupting the viral envelope. Also displays anti-leishmania activity by damaging parasite membrane. Does not show hemolytic activity. Acts synergistically with temporin-L that improves temporin-1Tb activity by preventing its self-association in lipopolysaccharides (LPS). In vitro, promotes cell migration and wound healing. This chain is Temporin-1Tb, found in Rana temporaria (European common frog).